The sequence spans 77 residues: Acyl carrier protein (77 aa).

In terms of domain architecture, Carrier spans 2–77 (SSIDKRIKEI…DAIDYITDHT (76 aa)). Ser37 is subject to O-(pantetheine 4'-phosphoryl)serine.

Belongs to the acyl carrier protein (ACP) family. Post-translationally, 4'-phosphopantetheine is transferred from CoA to a specific serine of apo-ACP by AcpS. This modification is essential for activity because fatty acids are bound in thioester linkage to the sulfhydryl of the prosthetic group.

It localises to the cytoplasm. Its pathway is lipid metabolism; fatty acid biosynthesis. Functionally, carrier of the growing fatty acid chain in fatty acid biosynthesis. The polypeptide is Acyl carrier protein (Geotalea daltonii (strain DSM 22248 / JCM 15807 / FRC-32) (Geobacter daltonii)).